The sequence spans 251 residues: Phosphate import ATP-binding protein PstB 2 (251 aa).

The ABC transporter domain maps to 5–246 (ISAKDVHLSY…PKKQITSDYL (242 aa)). 37–44 (GPSGCGKS) lines the ATP pocket.

Belongs to the ABC transporter superfamily. Phosphate importer (TC 3.A.1.7) family. The complex is composed of two ATP-binding proteins (PstB), two transmembrane proteins (PstC and PstA) and a solute-binding protein (PstS).

It localises to the cell membrane. It carries out the reaction phosphate(out) + ATP + H2O = ADP + 2 phosphate(in) + H(+). Part of the ABC transporter complex PstSACB involved in phosphate import. Responsible for energy coupling to the transport system. The chain is Phosphate import ATP-binding protein PstB 2 from Lactobacillus acidophilus (strain ATCC 700396 / NCK56 / N2 / NCFM).